The sequence spans 922 residues: uncharacterized protein (922 aa).

Disordered regions lie at residues 459–522, 539–627, 649–668, 692–835, and 856–879; these read SLQD…QPKN, SNSA…SSLG, GFSS…RQPF, QKLD…VTSL, and PWRK…RPER. Over residues 546–567 the composition is skewed to basic residues; it reads KAKHSSNKPHKAASSRISKTKS. The segment covering 582-600 has biased composition (basic and acidic residues); it reads KKSEESKQSGKKVKVEEKQ. Residues 651–660 show a composition bias toward low complexity; it reads SSSRTLGSSS. The span at 692–702 shows a compositional bias: basic and acidic residues; it reads QKLDGSAEKEC. Composition is skewed to polar residues over residues 755 to 779 and 790 to 824; these read DSTN…SLTG and KATQ…SSLQ. Residues 872 to 899 are a coiled coil; the sequence is TEEQRPEREAMKRKAQQERENAAKYTSL.

This is an uncharacterized protein from Homo sapiens (Human).